The following is a 216-amino-acid chain: 2,5-diamino-6-ribosylamino-4(3H)-pyrimidinone 5'-phosphate reductase (216 aa).

Residues T51, D55, 79-82 (SMAR), V126, and 148-151 (GSTL) contribute to the NADP(+) site.

It belongs to the HTP reductase family. As to quaternary structure, homodimer.

The enzyme catalyses 2,5-diamino-6-(1-D-ribitylamino)pyrimidin-4(3H)-one 5'-phosphate + NADP(+) = 2,5-diamino-6-(1-D-ribosylamino)pyrimidin-4(3H)-one 5'-phosphate + NADPH + H(+). The catalysed reaction is 2,5-diamino-6-(1-D-ribitylamino)pyrimidin-4(3H)-one 5'-phosphate + NAD(+) = 2,5-diamino-6-(1-D-ribosylamino)pyrimidin-4(3H)-one 5'-phosphate + NADH + H(+). Its pathway is cofactor biosynthesis; riboflavin biosynthesis. Catalyzes an early step in riboflavin biosynthesis, the NADPH-dependent reduction of the ribose side chain of 2,5-diamino-6-ribosylamino-4(3H)-pyrimidinone 5'-phosphate, yielding 2,5-diamino-6-ribitylamino-4(3H)-pyrimidinone 5'-phosphate. In Methanothermobacter thermautotrophicus (strain ATCC 29096 / DSM 1053 / JCM 10044 / NBRC 100330 / Delta H) (Methanobacterium thermoautotrophicum), this protein is 2,5-diamino-6-ribosylamino-4(3H)-pyrimidinone 5'-phosphate reductase.